Reading from the N-terminus, the 205-residue chain is Large ribosomal subunit protein uL4 (205 aa).

The segment at 54–78 is disordered; the sequence is GDISGTTAKPHRQKHTGRARQGSLR. The span at 62-71 shows a compositional bias: basic residues; sequence KPHRQKHTGR.

Belongs to the universal ribosomal protein uL4 family. As to quaternary structure, part of the 50S ribosomal subunit.

Functionally, one of the primary rRNA binding proteins, this protein initially binds near the 5'-end of the 23S rRNA. It is important during the early stages of 50S assembly. It makes multiple contacts with different domains of the 23S rRNA in the assembled 50S subunit and ribosome. In terms of biological role, forms part of the polypeptide exit tunnel. This chain is Large ribosomal subunit protein uL4, found in Ehrlichia chaffeensis (strain ATCC CRL-10679 / Arkansas).